The primary structure comprises 172 residues: RNA pyrophosphohydrolase (172 aa).

The Nudix hydrolase domain occupies 8-153 (QHRPNVGVVL…KRGVYEAVVA (146 aa)). Residues 43–64 (GGVDEGEDLEVAARRELAEETG) carry the Nudix box motif.

It belongs to the Nudix hydrolase family. RppH subfamily. It depends on a divalent metal cation as a cofactor.

Functionally, accelerates the degradation of transcripts by removing pyrophosphate from the 5'-end of triphosphorylated RNA, leading to a more labile monophosphorylated state that can stimulate subsequent ribonuclease cleavage. The sequence is that of RNA pyrophosphohydrolase from Caulobacter vibrioides (strain ATCC 19089 / CIP 103742 / CB 15) (Caulobacter crescentus).